Here is a 332-residue protein sequence, read N- to C-terminus: MLSARTVLSRAGLISNASRLNSTLVVAEHDETKLAPITLNAITAASKLGNEVSVLVTGANATKVAEQVAKVNGVKRVLVAQDEKLKNNLPERVAPVILASQKQFNFTAITAGSSAFGRGVIPRVAAKLDVSSISDVTEVHSADSFTRTLYAGNAVKKVKSTAPIKLLTFRGTSFEPAKEGGSGAVENAPSADIKTDLSEFLGQELSKSERPDLATAKVVVSGGRGLKSGDNFKLIYDLADKLGAGVGASRAAVDAGYVPNDMQVGQTGKIVAPELYIAIGISGAIQHLAGMKDSKVIVAINKDPDAPIFQVADIGLKADLFKAVPELTAALP.

Residue 275–303 coordinates FAD; sequence LYIAIGISGAIQHLAGMKDSKVIVAINKD.

This sequence belongs to the ETF alpha-subunit/FixB family. In terms of assembly, heterodimer of an alpha and a beta subunit. It depends on FAD as a cofactor.

It is found in the mitochondrion matrix. The electron transfer flavoprotein serves as a specific electron acceptor for several dehydrogenases, including five acyl-CoA dehydrogenases, glutaryl-CoA and sarcosine dehydrogenase. It transfers the electrons to the main mitochondrial respiratory chain via ETF-ubiquinone oxidoreductase (ETF dehydrogenase). The protein is Probable electron transfer flavoprotein subunit alpha, mitochondrial of Caenorhabditis elegans.